A 239-amino-acid polypeptide reads, in one-letter code: Ribitol-5-phosphate cytidylyltransferase (239 aa).

CTP-binding positions include 7–10 and 80–86; these read FAGG and GETGQMS.

The protein belongs to the IspD/TarI cytidylyltransferase family. TarI subfamily.

The enzyme catalyses D-ribitol 5-phosphate + CTP + H(+) = CDP-L-ribitol + diphosphate. It functions in the pathway cell wall biogenesis; poly(ribitol phosphate) teichoic acid biosynthesis. Functionally, catalyzes the transfer of the cytidylyl group of CTP to D-ribitol 5-phosphate. In Streptococcus agalactiae serotype III (strain NEM316), this protein is Ribitol-5-phosphate cytidylyltransferase.